Reading from the N-terminus, the 219-residue chain is Ribose-5-phosphate isomerase A (219 aa).

Substrate contacts are provided by residues 28 to 31 (TGST), 81 to 84 (DGAD), and 94 to 97 (KGGG). Catalysis depends on Glu103, which acts as the Proton acceptor. A substrate-binding site is contributed by Lys121.

It belongs to the ribose 5-phosphate isomerase family. As to quaternary structure, homodimer.

The catalysed reaction is aldehydo-D-ribose 5-phosphate = D-ribulose 5-phosphate. Its pathway is carbohydrate degradation; pentose phosphate pathway; D-ribose 5-phosphate from D-ribulose 5-phosphate (non-oxidative stage): step 1/1. In terms of biological role, catalyzes the reversible conversion of ribose-5-phosphate to ribulose 5-phosphate. The sequence is that of Ribose-5-phosphate isomerase A from Edwardsiella ictaluri (strain 93-146).